A 72-amino-acid chain; its full sequence is Conotoxin Gla(2)-TxVI/A (72 aa).

Positions 1–19 (MQKLIILLLVAAVLMSTQA) are cleaved as a signal peptide. A propeptide spanning residues 20–44 (LFQEKRPMKKIDFLSKGKTDAEKQQ) is cleaved from the precursor. Cystine bridges form between Cys-48–Cys-62, Cys-55–Cys-66, and Cys-61–Cys-70. The residue at position 56 (Glu-56) is a 4-carboxyglutamate. 4-hydroxyproline is present on Pro-58. A Serine amide modification is found at Ser-71.

The protein belongs to the conotoxin O2 superfamily. In terms of processing, brominated at one of the Trp residues. Expressed by the venom duct.

Its subcellular location is the secreted. The polypeptide is Conotoxin Gla(2)-TxVI/A (Conus textile (Cloth-of-gold cone)).